A 267-amino-acid polypeptide reads, in one-letter code: Proteasome assembly chaperone 2 (267 aa).

It belongs to the PSMG2 family. In terms of assembly, component of the 20S proteasome chaperone. Forms a heterodimer with PBA1 that binds to proteasome precursors.

It localises to the cytoplasm. In terms of biological role, involved in 20S proteasome assembly. Required for maximal proteasome activity. Affects the chymotrypsin-like activity of the proteasome. Can be degraded by the proteasome. Involved in the endoplasmic reticulum-associated degradation (ERAD). This Saccharomyces cerevisiae (strain ATCC 204508 / S288c) (Baker's yeast) protein is Proteasome assembly chaperone 2 (ADD66).